The following is a 223-amino-acid chain: Lipoprotein-releasing system ATP-binding protein LolD (223 aa).

Positions methionine 1–alanine 223 constitute an ABC transporter domain. Residue glycine 32–serine 39 coordinates ATP.

It belongs to the ABC transporter superfamily. Lipoprotein translocase (TC 3.A.1.125) family. As to quaternary structure, the complex is composed of two ATP-binding proteins (LolD) and two transmembrane proteins (LolC and LolE).

The protein resides in the cell inner membrane. Part of the ABC transporter complex LolCDE involved in the translocation of mature outer membrane-directed lipoproteins, from the inner membrane to the periplasmic chaperone, LolA. Responsible for the formation of the LolA-lipoprotein complex in an ATP-dependent manner. The chain is Lipoprotein-releasing system ATP-binding protein LolD from Koribacter versatilis (strain Ellin345).